Here is a 443-residue protein sequence, read N- to C-terminus: EGF-containing fibulin-like extracellular matrix protein 2 (443 aa).

An N-terminal signal peptide occupies residues 1 to 27; sequence MLPFASCLPGSLLLWAFLLLLLGAASP. The residue at position 28 (Gln28) is a Pyrrolidone carboxylic acid. Residues 36-81 form the EGF-like 1; atypical domain; that stretch reads YTECTDGYEWDADSQHCRDVNECLTIPEACKGEMKCINHYGGYLCL. 18 disulfides stabilise this stretch: Cys58/Cys121, Cys65/Cys80, Cys71/Cys109, Cys127/Cys140, Cys134/Cys149, Cys151/Cys162, Cys168/Cys177, Cys173/Cys186, Cys188/Cys201, Cys207/Cys217, Cys213/Cys226, Cys228/Cys241, Cys247/Cys258, Cys254/Cys267, Cys269/Cys281, Cys287/Cys300, Cys294/Cys309, and Cys315/Cys327. Residues 91 to 117 form a disordered region; it reads LHGEGPPPPAAHAQQPNPCPQGYEPDE. Positions 123 to 163 constitute an EGF-like 2; calcium-binding domain; the sequence is DVDECTQALHDCRPSQDCHNLPGSYQCTCPDGYRKIGPECV. Positions 164–202 constitute an EGF-like 3; calcium-binding domain; the sequence is DIDECRYRYCQHRCVNLPGSFRCQCEPGFQLGPNNRSCV. Asn198 carries an N-linked (GlcNAc...) asparagine glycan. The EGF-like 4; calcium-binding domain maps to 203–242; the sequence is DVNECDMGAPCEQRCFNSYGTFLCRCNQGYELHRDGFSCS. An EGF-like 5; calcium-binding domain is found at 243 to 282; that stretch reads DIDECGYSSYLCQYRCVNEPGRFSCHCPQGYQLLATRLCQ. The 46-residue stretch at 283–328 folds into the EGF-like 6; calcium-binding domain; the sequence is DIDECETGAHQCSEAQTCVNFHGGYRCVDTNRCVEPYVQVSDNRCL. N-linked (GlcNAc...) asparagine glycosylation occurs at Asn394.

The protein belongs to the fibulin family. Homodimer; disulfide-linked. Multimer; allows heparin binding. Monomer. Binds preferentially to p53 mutants. Interacts with FBN1 (via N-terminal domain); this interaction inhibits EFEMP2 binding to LOX and ELN. Interacts with ELN with moderate affinity; this interaction regulates ELN self-assembly maturation stage. Interacts with PCOLCE. Interacts with collagen type IV trimer (COL4A1-COL4A1-COL4A2), NID2 and moderately with COL15A1-derived endostatin. Interacts with EMILIN1; this interaction promotes the incorporation of EFEMP2 into the extracellular matrix. Interacts with LTBP4; the LTBP4 long form (LTBP4L) has a stronger binding affinity than the LTBP4 short form and the LTBP4 long form promotes fibrillar deposition of EFEMP2. Interacts with LOX (via propeptide); this interaction is strong and facilitates formation of ternary complexes with ELN during elastic fiber assembly; this interaction limits interaction of EFEMP2 with FBLN5. Interacts with PITX2. Interacts with FBLN5 with moderate affinity. Interacts with LOXL1 (via propeptide), LTBP1 and TGFB1 stronger than with LOXL2 and LTBP3. N-glycosylated; contains mostly complex-type glycans. Not O-glycosylated. Post-translationally, cleaved by ELANE; produces a 50-55 kDa fragment. Cleaved by MMP2 and MMP9; produces several fragments. As to expression, expressed in elastic fibers of the skin, near the dermal-epidermal junction, surrounding the hair follicles and throughout the dermis. Expressed in tendon around tenocytes. Prominently expressed in cartilage, bone, perichondrium and ligaments. Also detected in bone marrow stroma. Expressed in aorta, lung, and esophagus.

It is found in the secreted. It localises to the extracellular space. Its subcellular location is the extracellular matrix. The protein resides in the basement membrane. Functionally, plays a crucial role in elastic fiber formation in tissue, and in the formation of ultrastructural connections between elastic laminae and smooth muscle cells in the aorta, therefore participates in terminal differentiation and maturation of smooth muscle cell (SMC) and in the mechanical properties and wall integrity maintenance of the aorta. In addition, is involved in the control of collagen fibril assembly in tissue throught proteolytic activation of LOX leading to cross- linking of collagen and elastin. Also promotes ELN coacervation and participates in the deposition of ELN coacervates on to microfibrils but also regulates ELN cross- linking through LOX interaction. Moreover adheres to the cells through heparin binding in a calcium-dependent manner and regulates vascularlar smooth muscle cells proliferation through angiotensin signaling. The chain is EGF-containing fibulin-like extracellular matrix protein 2 from Mus musculus (Mouse).